We begin with the raw amino-acid sequence, 555 residues long: MTTSSSGSVETSANSRPGTFSFASASFTDLLGGNAGAGGGGVSRYKAMTPPSLPLSPPPVSPSSFFNSPIGMNQADFLGSPVLLTSSIFPSPTTGAFASQHFDWRPEVAAAQSADQGGKDEQRNSYSDFSFQTAPASEEAARTTTFQPPVPPALLGDEAYRSQQQQQPWGYQQQPAGMDAGANAASFGAAPFQATSSEMAPQVQGGGGYSQPQSQRRSSDDGYNWRKYGQKQVKGSENPRSYYKCTFPNCPTKKKVERSLDGQITEIVYKGTHNHAKPQNTRRNSGSSAAQVLQSGGDMSEHSFGGMSGTAATPENSSASFGDDEIGVGSPRAGNGGGDEFDDDEPDSKRWRKDGDGEGISMAGNRTVREPRVVVQTMSDIDILDDGYRWRKYGQKVVKGNPNPRSYYKCTTAGCPVRKHVERASHDLRAVITTYEGKHNHDVPAARGSAALYRPAPPAAAATSSHPYLPNQPPPMSYQPTGPQPYALRPDGFGGQGPFGGVVGGSSFGGLSGFDDARGSYMSQHQQQQRQNDAMHASRAKEEPGDDMFFQNSLY.

Disordered regions lie at residues 38–65 and 132–248; these read GGGG…PSSF and QTAP…CTFP. Over residues 51–61 the composition is skewed to pro residues; that stretch reads PSLPLSPPPVS. The span at 163–194 shows a compositional bias: low complexity; that stretch reads QQQQQPWGYQQQPAGMDAGANAASFGAAPFQA. The WRKY 1 DNA-binding region spans 214–278; it reads SQRRSSDDGY…YKGTHNHAKP (65 aa). The short motif at 253–259 is the Nuclear localization signal element; the sequence is KKKVERS. A disordered region spans residues 270 to 367; sequence KGTHNHAKPQ…EGISMAGNRT (98 aa). Composition is skewed to polar residues over residues 277–294 and 310–320; these read KPQN…QVLQ and TAATPENSSAS. Over residues 347–356 the composition is skewed to basic and acidic residues; it reads DSKRWRKDGD. Residues 379–444 constitute a DNA-binding region (WRKY 2); sequence SDIDILDDGY…YEGKHNHDVP (66 aa). Residues 466-555 are transcription repression of gibberellic acid (GA)-induced promoters; the sequence is HPYLPNQPPP…DDMFFQNSLY (90 aa). 2 disordered regions span residues 471-498 and 513-555; these read NQPP…GQGP and GFDD…NSLY.

The protein belongs to the WRKY group II-a family. Expressed in aleurone cells. Mostly expressed in aleurone layers and leaves, and, to a lower extent, in roots, panicles and embryos.

The protein resides in the nucleus. Its function is as follows. Transcription repressor. Interacts specifically with the W box (5'-(T)TGAC[CT]-3'), a frequently occurring elicitor-responsive cis-acting element. Negative regulator of both gibberellic acid (GA) and abscisic acid (ABA) signaling in aleurone cells, probably by interfering with GAM1, via the specific repression of GA- and ABA-induced promoters. The chain is WRKY transcription factor WRKY24 from Oryza sativa subsp. indica (Rice).